The chain runs to 514 residues: Peptide chain release factor 3 (514 aa).

One can recognise a tr-type G domain in the interval 8 to 268; it reads KKRRTFAIIS…TFLEFAPEPH (261 aa). GTP-binding positions include 17 to 24, 85 to 89, and 139 to 142; these read SHPDAGKT, DTPGH, and NKLD.

Belongs to the TRAFAC class translation factor GTPase superfamily. Classic translation factor GTPase family. PrfC subfamily.

It is found in the cytoplasm. In terms of biological role, increases the formation of ribosomal termination complexes and stimulates activities of RF-1 and RF-2. It binds guanine nucleotides and has strong preference for UGA stop codons. It may interact directly with the ribosome. The stimulation of RF-1 and RF-2 is significantly reduced by GTP and GDP, but not by GMP. This is Peptide chain release factor 3 from Streptococcus uberis (strain ATCC BAA-854 / 0140J).